Reading from the N-terminus, the 574-residue chain is 4-oxocyclohexanecarboxylate 2-dehydrogenase (574 aa).

It belongs to the FAD-dependent oxidoreductase 2 family. Monomer. Homodimer. The cofactor is FAD.

It carries out the reaction 4-oxocyclohexane-1-carboxylate + O2 = 4-oxocyclohex-2-ene-1-carboxylate + H2O2. Its activity is regulated as follows. Inhibited by 5,5'-dithio-bis(2- nitrobenzoate) and N-bromosuccinimide, but not by thiol and chelating reagents. Functionally, desaturase involved in a cyclohexanecarboxylate (CHCA) degradation pathway. Catalyzes the conversion of 4-oxocyclohexanecarboxylate (4-oxoCHCA) to 4-oxocyclohexenecarboxylate. Is highly specific for 4-oxocyclohexanecarboxylic acid and shows only slight activity with 4-oxo-2-methylcyclohex-2-enecarboxylic acid. The polypeptide is 4-oxocyclohexanecarboxylate 2-dehydrogenase (Sinomonas cyclohexanicum (Corynebacterium cyclohexanicum)).